Reading from the N-terminus, the 212-residue chain is Regulatory protein RecX (212 aa).

It belongs to the RecX family.

The protein localises to the cytoplasm. In terms of biological role, modulates RecA activity. The polypeptide is Regulatory protein RecX (Clostridium botulinum (strain Eklund 17B / Type B)).